Here is a 445-residue protein sequence, read N- to C-terminus: Damage suppressor protein (445 aa).

2 stretches are compositionally biased toward polar residues: residues 1-15 (MAST…SSTG) and 25-47 (SQGS…SATS). 2 disordered regions span residues 1-145 (MAST…HSVI) and 203-445 (YHSV…RKRK). The span at 61 to 73 (SSTTAGSSSTQGQ) shows a compositional bias: low complexity. The segment covering 74 to 87 (KFSTTPTDPKTFSS) has biased composition (polar residues). Positions 88 to 97 (DQKEKSKSPA) are enriched in basic and acidic residues. A compositionally biased stretch (low complexity) spans 117–138 (DAKSSGQSQGQSKDSGKSSSDS). Positions 207-228 (VGDKTDDKKEGEHSGDKKDDSK) are enriched in basic and acidic residues. The required and sufficient for DNA-binding and co-localization with nuclear DNA stretch occupies residues 208–445 (GDKTDDKKEG…GGKAGGRKRK (238 aa)). A compositionally biased stretch (polar residues) spans 245-256 (ETSGQAESSSGN). Over residues 257–306 (EGAAPAKGRGRGRPPAAAKGVAKGAAKGAAASKGAKSGAESSKGGEQSSG) the composition is skewed to low complexity. Positions 329-338 (GEGGASGSEG) are enriched in gly residues. A required for nucleosome binding and for the protection of chromatin from hydroxyl radical-mediated DNA damage region spans residues 360 to 445 (EPPRRSSRLT…GGKAGGRKRK (86 aa)). Low complexity predominate over residues 367 to 431 (RLTSSGTGAG…ASKAPQNGAG (65 aa)). Residues 432–445 (AKKKGGKAGGRKRK) show a composition bias toward basic residues.

It is found in the nucleus. Its function is as follows. Unique chromatin-associating protein that contributes to the organism's exceptional tolerance to harsh environmental stresses. Binds with a higher affinity to nucleosomes than to free DNA. Protects chromatin from damage caused by hydroxyl radical-mediated cleavage induced by X-rays or treatment with hydrogen peroxide. Suppresses X-ray-induced DNA damage that includes single-strand breaks (SSBs) as well as more hazardous double-strand breaks (DSBs), and improves radiotolerance. Also shields DNA against reactive oxygen species (ROS). The protein is Damage suppressor protein of Ramazzottius varieornatus (Water bear).